We begin with the raw amino-acid sequence, 382 residues long: N-acetylglucosamine-6-phosphate deacetylase (382 aa).

Glutamate 131 contacts a divalent metal cation. Position 142–143 (142–143 (TH)) interacts with substrate. A divalent metal cation-binding residues include histidine 195 and histidine 216. Residues 219–220 (NA), arginine 227, and 248–251 (DGLH) contribute to the substrate site. Aspartate 273 (proton donor/acceptor) is an active-site residue. 306 to 308 (LSG) is a binding site for substrate.

The protein belongs to the metallo-dependent hydrolases superfamily. NagA family. As to quaternary structure, homotetramer. It depends on a divalent metal cation as a cofactor.

The enzyme catalyses N-acetyl-D-glucosamine 6-phosphate + H2O = D-glucosamine 6-phosphate + acetate. Its pathway is amino-sugar metabolism; N-acetylneuraminate degradation; D-fructose 6-phosphate from N-acetylneuraminate: step 4/5. Involved in the first committed step in the biosynthesis of amino-sugar-nucleotides. Catalyzes the hydrolysis of the N-acetyl group of N-acetylglucosamine-6-phosphate (GlcNAc-6-P) to yield glucosamine 6-phosphate and acetate. Can probably also catalyze the deacetylation of N-acetyl-D-galactosamine 6-phosphate to D-galactosamine 6-phosphate. In Escherichia coli O157:H7, this protein is N-acetylglucosamine-6-phosphate deacetylase (nagA).